A 475-amino-acid chain; its full sequence is Sulfate adenylyltransferase subunit 1 (475 aa).

Residues 25-241 (KSLLRFLTCG…LENIEIQRVV (217 aa)) enclose the tr-type G domain. The tract at residues 34–41 (GSVDDGKS) is G1. Residue 34–41 (GSVDDGKS) coordinates GTP. The G2 stretch occupies residues 92–96 (GITID). A G3 region spans residues 113 to 116 (DTPG). GTP is bound by residues 113–117 (DTPGH) and 168–171 (NKMD). Residues 168-171 (NKMD) are G4. The segment at 206 to 208 (SAL) is G5.

This sequence belongs to the TRAFAC class translation factor GTPase superfamily. Classic translation factor GTPase family. CysN/NodQ subfamily. In terms of assembly, heterodimer composed of CysD, the smaller subunit, and CysN.

The catalysed reaction is sulfate + ATP + H(+) = adenosine 5'-phosphosulfate + diphosphate. It participates in sulfur metabolism; hydrogen sulfide biosynthesis; sulfite from sulfate: step 1/3. Its function is as follows. With CysD forms the ATP sulfurylase (ATPS) that catalyzes the adenylation of sulfate producing adenosine 5'-phosphosulfate (APS) and diphosphate, the first enzymatic step in sulfur assimilation pathway. APS synthesis involves the formation of a high-energy phosphoric-sulfuric acid anhydride bond driven by GTP hydrolysis by CysN coupled to ATP hydrolysis by CysD. The polypeptide is Sulfate adenylyltransferase subunit 1 (Cronobacter sakazakii (strain ATCC BAA-894) (Enterobacter sakazakii)).